A 1452-amino-acid polypeptide reads, in one-letter code: CLIP-associating protein 1 (1452 aa).

HEAT repeat units follow at residues 68-87, 88-124, and 163-200; these read LLGM…RFRS, QIGT…QASN, and LTLS…HVGE. Residues 239–299 form a disordered region; the sequence is KNFDDEDSVD…GTAKEGAGGV (61 aa). Low complexity predominate over residues 253-267; the sequence is SSASSSASSKAPQAA. 2 HEAT repeats span residues 407 to 442 and 443 to 479; these read HGAE…IRQT and HVPR…EWQT. 2 disordered regions span residues 545-735 and 771-792; these read SDSI…GISQ and YGMY…ERSY. Residues 550–569 show a composition bias toward low complexity; it reads SLPQSDRSSSSSQESLNRPL. The segment covering 573–597 has biased composition (polar residues); it reads RSPTGSTVSRASTATSKSTPGSLQR. 3 stretches are compositionally biased toward low complexity: residues 606–621, 645–659, and 668–682; these read AATC…ASAA, QSSG…TPAD, and VVSQ…SSPG. Positions 715-724 are enriched in polar residues; that stretch reads QGCSRETSPS. Low complexity predominate over residues 781–792; the sequence is SDASSACSERSY. An HEAT 6 repeat occupies 926–963; the sequence is QQFNILMRFIVDQTQTPNLKVKVAILKYIESLARQMDP. The segment at 1033–1076 is disordered; it reads LKNSSNSSMGSPSNTIGRTPSRHSSSRASPLTSPTNCSHGGLSP. A compositionally biased stretch (low complexity) spans 1034-1046; sequence KNSSNSSMGSPSN. Polar residues predominate over residues 1058-1070; that stretch reads SRASPLTSPTNCS. HEAT repeat units lie at residues 1256 to 1293 and 1374 to 1411; these read EHFK…NQPA and QILP…VIGE.

The protein belongs to the CLASP family. Interacts (via C-terminus) with clip1/clip-170, and cenpe.

Its subcellular location is the cytoplasm. It localises to the cytoskeleton. It is found in the microtubule organizing center. The protein localises to the centrosome. The protein resides in the chromosome. Its subcellular location is the centromere. It localises to the kinetochore. It is found in the spindle. The protein localises to the golgi apparatus. The protein resides in the trans-Golgi network. In terms of biological role, microtubule plus-end tracking protein that promotes the stabilization of dynamic microtubules during anaphase. Plays a crucial role in chromatin-induced microtubule formation. May also act at microtubule minus ends. May be involved in the nucleation of noncentrosomal microtubules originating from the trans-Golgi network (TGN). The sequence is that of CLIP-associating protein 1 from Xenopus tropicalis (Western clawed frog).